The primary structure comprises 264 residues: Astacin-like metalloprotease toxin 1 (264 aa).

Positions 1–16 (MIKYIGVFAFLVGGFC) are cleaved as a signal peptide. The propeptide occupies 17 to 51 (HDFETVISNQDPIVDGMRLVEGDMLFDDGPLFTER). The 198-residue stretch at 52 to 249 (NAVKYDQQLW…VKVNKLYKCP (198 aa)) folds into the Peptidase M12A domain. 2 cysteine pairs are disulfide-bonded: C93–C248 and C114–C135. H143 contacts Zn(2+). Residue E144 is part of the active site. Residues H147 and H153 each contribute to the Zn(2+) site. N-linked (GlcNAc...) asparagine glycans are attached at residues N173 and N185.

Monomer. The cofactor is Zn(2+). Expressed by the venom gland.

The protein resides in the secreted. With respect to regulation, inhibited by 1,10-phenanthroline. In terms of biological role, zinc metalloprotease. Provoques deadhesion of endothelial cells from cell cultures, and also degradation of fibronectin, fibrinogen and gelatin in vitro. Its role in the venom is not fully understood but it might act as a spreading factor that facilitates diffusion of other venom toxins. Alternatively, it might be involved in the proteolytic processing of other venom toxins or it might play a role in extra-oral digestion of prey. This Loxosceles intermedia (Brown spider) protein is Astacin-like metalloprotease toxin 1.